We begin with the raw amino-acid sequence, 101 residues long: Fructose-bisphosphate aldolase (101 aa).

Catalysis depends on Lys-11, which acts as the Schiff-base intermediate with dihydroxyacetone-P.

This sequence belongs to the class I fructose-bisphosphate aldolase family.

The enzyme catalyses beta-D-fructose 1,6-bisphosphate = D-glyceraldehyde 3-phosphate + dihydroxyacetone phosphate. The protein operates within carbohydrate degradation; glycolysis; D-glyceraldehyde 3-phosphate and glycerone phosphate from D-glucose: step 4/4. In Lymnaea stagnalis (Great pond snail), this protein is Fructose-bisphosphate aldolase.